The primary structure comprises 1620 residues: ABC-type organic anion transporter ABCA8B (1620 aa).

A run of 7 helical transmembrane segments spans residues 30–50, 223–243, 267–287, 298–318, 326–346, 352–372, and 396–416; these read SLME…YPHG, FFIF…SINV, SWGL…ALVI, FMVV…LAFL, SVLT…LGFT, LPAP…TLGM, and LIIA…ALMM. The ABC transporter 1 domain occupies 479-714; the sequence is IRIRNISKEY…WGVGYHLSLQ (236 aa). 515–522 is a binding site for ATP; it reads GHSGAGKS. N-linked (GlcNAc...) asparagine glycosylation is present at Asn-723. The next 8 membrane-spanning stretches (helical) occupy residues 860–880, 979–999, 1023–1043, 1069–1089, 1105–1125, 1135–1155, 1164–1184, and 1194–1214; these read TLLS…FENI, CFPV…KPSA, TAFW…SSVT, MVDI…DYLF, IPCS…ISFI, IWSL…LLAF, IIFL…LHLF, and VIEP…FIFT. The ABC transporter 2 domain maps to 1283–1516; it reads LRKEYAGKQK…FGKDYLLEMK (234 aa). 1321–1328 serves as a coordination point for ATP; it reads GHNGAGKS.

The protein belongs to the ABC transporter superfamily. ABCA family. As to expression, expressed in heart, brain, lung, liver and skeletal muscle. Highly expressed in the liver, and is also abundant in heart and skeletal muscle. Highly expressed in liver.

The protein resides in the cell membrane. It is found in the basolateral cell membrane. The catalysed reaction is taurocholate(in) + ATP + H2O = taurocholate(out) + ADP + phosphate + H(+). The enzyme catalyses cholesterol(in) + ATP + H2O = cholesterol(out) + ADP + phosphate + H(+). With respect to regulation, cholesterol efflux is increased by extracellularly applied taurocholate. Functionally, mediates cholesterol and taurocholate efflux. Through the interaction with ABCA1 potentiates the cholesterol efflux to lipid-free APOA1, in turn regulates high-density lipoprotein cholesterol levels. This chain is ABC-type organic anion transporter ABCA8B, found in Mus musculus (Mouse).